The following is a 427-amino-acid chain: Lactadherin (427 aa).

A signal peptide spans 1–18 (MPCPRLLAALFCSSGLFA). EGF-like domains are found at residues 20–59 (SGDFCDSSLCLHGGTCLLNEDRTPPFYCLCPEGFTGLLCN) and 62–106 (EHGP…IHCE). 3 disulfide bridges follow: Cys-24–Cys-35, Cys-29–Cys-47, and Cys-49–Cys-58. An O-linked (Fuc...) serine; in PAS-6 glycan is attached at Ser-27. A glycan (O-linked (Fuc...) threonine; in PAS-7) is linked at Thr-34. Asn-59 carries an N-linked (GlcNAc...) (hybrid) asparagine; in PAS-6 and PAS-7 glycan. Cystine bridges form between Cys-66/Cys-77, Cys-71/Cys-94, Cys-96/Cys-105, Cys-109/Cys-265, Cys-252/Cys-256, and Cys-270/Cys-427. Residues 85 to 87 (RGD) carry the Cell attachment site motif. F5/8 type C domains are found at residues 109–265 (CTSP…LLGC) and 270–427 (CTEP…LLGC). Asn-227 carries N-linked (GlcNAc...) (high mannose) asparagine; in PAS-6 glycosylation.

Post-translationally, the two O-linked glycans consist of Gal, GlcNAc and Fuc, with probably Fuc as reducing terminal sugar. As to expression, milk and spermatozoan. Also present in epididymis, kidney, heart, lymphatic gland and spleen but not esophagus, small intestine, muscle and liver.

The protein localises to the membrane. Its subcellular location is the secreted. It localises to the cytoplasmic vesicle. The protein resides in the secretory vesicle. It is found in the acrosome membrane. Its function is as follows. Contributes to phagocytic removal of apoptotic cells in many tissues. Plays an important role in the maintenance of intestinal epithelial homeostasis and the promotion of mucosal healing. Promotes VEGF-dependent neovascularization. Specific ligand for the alpha-v/beta-3 and alpha-v/beta-5 receptors. Also binds to phosphatidylserine-enriched cell surfaces in a receptor-independent manner. Zona pellucida-binding protein which may play a role in gamete interaction. The chain is Lactadherin (MFGE8) from Bos taurus (Bovine).